The following is a 231-amino-acid chain: Large ribosomal subunit protein uL1 (231 aa).

Belongs to the universal ribosomal protein uL1 family. Part of the 50S ribosomal subunit.

In terms of biological role, binds directly to 23S rRNA. The L1 stalk is quite mobile in the ribosome, and is involved in E site tRNA release. Functionally, protein L1 is also a translational repressor protein, it controls the translation of the L11 operon by binding to its mRNA. The sequence is that of Large ribosomal subunit protein uL1 from Macrococcus caseolyticus (strain JCSC5402) (Macrococcoides caseolyticum).